Here is a 344-residue protein sequence, read N- to C-terminus: tRNA N6-adenosine threonylcarbamoyltransferase (344 aa).

Positions 110 and 114 each coordinate Fe cation. Substrate-binding positions include 133-137, aspartate 166, glycine 179, and asparagine 278; that span reads VMSGA. Residue aspartate 303 coordinates Fe cation.

Belongs to the KAE1 / TsaD family. Fe(2+) serves as cofactor.

It is found in the cytoplasm. It catalyses the reaction L-threonylcarbamoyladenylate + adenosine(37) in tRNA = N(6)-L-threonylcarbamoyladenosine(37) in tRNA + AMP + H(+). Functionally, required for the formation of a threonylcarbamoyl group on adenosine at position 37 (t(6)A37) in tRNAs that read codons beginning with adenine. Is involved in the transfer of the threonylcarbamoyl moiety of threonylcarbamoyl-AMP (TC-AMP) to the N6 group of A37, together with TsaE and TsaB. TsaD likely plays a direct catalytic role in this reaction. The chain is tRNA N6-adenosine threonylcarbamoyltransferase from Chlamydia felis (strain Fe/C-56) (Chlamydophila felis).